Reading from the N-terminus, the 218-residue chain is Suppressor of silencing P0 (218 aa).

An F-box-like domain is found at 63–67 (LPLHL).

It belongs to the polerovirus P0 protein family. As to quaternary structure, interacts (via F-box-like domain) with host AGO1; this interaction targets AGO1 for degradation, and thereby suppresses the silencing function of the latter. Interacts (via F-box-like domain) with host ASK1 and ASK2 (SKP proteins); these interactions are essential for viral pathogenicity. Part of a SCF P0 complex composed of P0 and the host proteins SKP and CUL1.

In terms of biological role, suppressor of RNA-mediated gene silencing, also known as post-transcriptional gene silencing (PTGS), a mechanism of plant viral defense that limits the accumulation of viral RNAs. The P0 protein suppresses local PTGS using its F-box-like domain to mediate destabilization and degradation of the AGO1 protein. In Beet western yellows virus (isolate GB1) (BWYV), this protein is Suppressor of silencing P0.